We begin with the raw amino-acid sequence, 387 residues long: Exodeoxyribonuclease 7 large subunit (387 aa).

The protein belongs to the XseA family. In terms of assembly, heterooligomer composed of large and small subunits.

It is found in the cytoplasm. It carries out the reaction Exonucleolytic cleavage in either 5'- to 3'- or 3'- to 5'-direction to yield nucleoside 5'-phosphates.. Functionally, bidirectionally degrades single-stranded DNA into large acid-insoluble oligonucleotides, which are then degraded further into small acid-soluble oligonucleotides. The sequence is that of Exodeoxyribonuclease 7 large subunit from Campylobacter jejuni subsp. doylei (strain ATCC BAA-1458 / RM4099 / 269.97).